The sequence spans 345 residues: Phosphoribosylformylglycinamidine cyclo-ligase (345 aa).

Belongs to the AIR synthase family.

Its subcellular location is the cytoplasm. The enzyme catalyses 2-formamido-N(1)-(5-O-phospho-beta-D-ribosyl)acetamidine + ATP = 5-amino-1-(5-phospho-beta-D-ribosyl)imidazole + ADP + phosphate + H(+). It participates in purine metabolism; IMP biosynthesis via de novo pathway; 5-amino-1-(5-phospho-D-ribosyl)imidazole from N(2)-formyl-N(1)-(5-phospho-D-ribosyl)glycinamide: step 2/2. This Shewanella denitrificans (strain OS217 / ATCC BAA-1090 / DSM 15013) protein is Phosphoribosylformylglycinamidine cyclo-ligase.